Consider the following 271-residue polypeptide: Oligodendrocyte transcription factor 1 (271 aa).

Residues 38 to 117 (YRQPPSSSSS…RKINSRERKR (80 aa)) are disordered. Over residues 43-61 (SSSSSSTSSTSSTSSSSTT) the composition is skewed to low complexity. One can recognise a bHLH domain in the interval 105–164 (QLRRKINSRERKRMQDLNLAMDALREVILPYSAAHCQGAPGRKLSKIATLLLARNYILLL).

In terms of tissue distribution, expressed in the brain, in oligodendrocytes. Strongly expressed in oligodendrogliomas, while expression is weak to moderate in astrocytomas. Expression in glioblastomas is highly variable.

It localises to the nucleus. Promotes formation and maturation of oligodendrocytes, especially within the brain. Cooperates with OLIG2 to establish the pMN domain of the embryonic neural tube. This is Oligodendrocyte transcription factor 1 (OLIG1) from Homo sapiens (Human).